An 89-amino-acid chain; its full sequence is Small ribosomal subunit protein uS15 (89 aa).

It belongs to the universal ribosomal protein uS15 family. Part of the 30S ribosomal subunit. Forms a bridge to the 50S subunit in the 70S ribosome, contacting the 23S rRNA.

One of the primary rRNA binding proteins, it binds directly to 16S rRNA where it helps nucleate assembly of the platform of the 30S subunit by binding and bridging several RNA helices of the 16S rRNA. In terms of biological role, forms an intersubunit bridge (bridge B4) with the 23S rRNA of the 50S subunit in the ribosome. This Paenarthrobacter aurescens (strain TC1) protein is Small ribosomal subunit protein uS15.